The following is a 131-amino-acid chain: Small ribosomal subunit protein uS8 (131 aa).

The protein belongs to the universal ribosomal protein uS8 family. Part of the 30S ribosomal subunit. Contacts proteins S5 and S12.

In terms of biological role, one of the primary rRNA binding proteins, it binds directly to 16S rRNA central domain where it helps coordinate assembly of the platform of the 30S subunit. This chain is Small ribosomal subunit protein uS8, found in Alkalilimnicola ehrlichii (strain ATCC BAA-1101 / DSM 17681 / MLHE-1).